Here is a 153-residue protein sequence, read N- to C-terminus: Aspartate carbamoyltransferase regulatory chain (153 aa).

Zn(2+) contacts are provided by cysteine 109, cysteine 114, cysteine 138, and cysteine 141.

This sequence belongs to the PyrI family. In terms of assembly, contains catalytic and regulatory chains. The cofactor is Zn(2+).

Functionally, involved in allosteric regulation of aspartate carbamoyltransferase. The protein is Aspartate carbamoyltransferase regulatory chain of Salmonella paratyphi A (strain ATCC 9150 / SARB42).